Reading from the N-terminus, the 49-residue chain is MATAVYRCAKCGKEVELDLATAREVRCPYCGSKILYKPRPRVARRVKAI.

Zn(2+) contacts are provided by Cys-11, Cys-27, and Cys-30.

This sequence belongs to the archaeal Rpo12/eukaryotic RPC10 RNA polymerase subunit family. Part of the RNA polymerase complex. Zn(2+) serves as cofactor.

It localises to the cytoplasm. Its subcellular location is the chromosome. It carries out the reaction RNA(n) + a ribonucleoside 5'-triphosphate = RNA(n+1) + diphosphate. In terms of biological role, DNA-dependent RNA polymerase (RNAP) catalyzes the transcription of DNA into RNA using the four ribonucleoside triphosphates as substrates. This Thermococcus kodakarensis (strain ATCC BAA-918 / JCM 12380 / KOD1) (Pyrococcus kodakaraensis (strain KOD1)) protein is DNA-directed RNA polymerase subunit Rpo12.